Consider the following 301-residue polypeptide: MDIDARIKAYKFVAYSAVTFSVVAVVSVFITLPMVYNYVNNVKKQIHTDVNFCKVSARDIWSEVHLIKDAPGNNTRVARQAYSTGGAGGGGGGGGGGCDGCCNPGPPGPGGSPGKPGKPGKPGAPGAPGNPGKGASAPCEPVTQPPCQPCPGGPPGPAGPAGPPGPPGPDGNPGSPAGPSGPGPAGPPGPAGPAGNDGAPGAPGGPGEPGASEQGGPGEPGPAGPPGPAGPAGNDGAPGTGGPGPAGPKGPPGAAGAPGADGNPGGPGTAGKPGGEGEKGICPKYCAIDGGVFFEDGTRRR.

The signal sequence occupies residues 1–37 (MDIDARIKAYKFVAYSAVTFSVVAVVSVFITLPMVYN). Triple-helical region regions lie at residues 105–134 (GPPG…PGKG), 153–176 (GPPG…PGSP), 183–212 (GPAG…PGAS), and 215–282 (GGPG…KGIC). The interval 109 to 284 (PGGSPGKPGK…GEGEKGICPK (176 aa)) is disordered. Pro residues-rich tracts occupy residues 143-170 (TQPP…PGPD) and 179-191 (PSGP…PGPA). Gly residues predominate over residues 201–218 (GAPGGPGEPGASEQGGPG). The span at 219–229 (EPGPAGPPGPA) shows a compositional bias: pro residues. Positions 252–261 (PGAAGAPGAD) are enriched in low complexity. The span at 262 to 274 (GNPGGPGTAGKPG) shows a compositional bias: gly residues.

This sequence belongs to the cuticular collagen family. As to quaternary structure, collagen polypeptide chains are complexed within the cuticle by disulfide bonds and other types of covalent cross-links. In terms of tissue distribution, syncytial dorsal and ventral epidermis.

Its function is as follows. Nematode cuticles are composed largely of collagen-like proteins. The cuticle functions both as an exoskeleton and as a barrier to protect the worm from its environment. This Caenorhabditis elegans protein is Cuticle collagen 2 (col-2).